A 99-amino-acid polypeptide reads, in one-letter code: Protein dpy-30 homolog (99 aa).

Met1 carries the post-translational modification N-acetylmethionine. Residues Met1 to Ser26 are disordered. Position 19 is a phosphoserine (Ser19). Residue Lys35 is modified to N6-acetyllysine; alternate. A Glycyl lysine isopeptide (Lys-Gly) (interchain with G-Cter in SUMO2); alternate cross-link involves residue Lys35.

It belongs to the dpy-30 family. In terms of assembly, homodimer. Core component of several methyltransferase-containing complexes including MLL1/MLL, MLL2/3 (also named ASCOM complex) and MLL4/WBP7. Each complex is at least composed of ASH2L, RBBP5, WDR5, DPY30, one or more specific histone methyltransferases (KMT2A/MLL1, KMT2D/MLL2, KMT2C/MLL3 and KMT2B/MLL4), and the facultative components MEN1, HCFC1, HCFC2, NCOA6, KDM6A, PAXIP1/PTIP, PAGR1 and alpha- and beta-tubulin PAXIP1/PTIP, PAGR1 and alpha- and beta-tubulin. Interacts with ASH2L. The interaction with ASH2L is direct. Interacts with ARFGEF1. Component of the SET1 complex, at least composed of the catalytic subunit (SETD1A or SETD1B), WDR5, WDR82, RBBP5, ASH2L/ASH2, CXXC1/CFP1, HCFC1 and DPY30.

The protein localises to the nucleus. Its subcellular location is the golgi apparatus. The protein resides in the trans-Golgi network. As part of the MLL1/MLL complex, involved in the methylation of histone H3 at 'Lys-4', particularly trimethylation. Histone H3 'Lys-4' methylation represents a specific tag for epigenetic transcriptional activation. May play some role in histone H3 acetylation. In embryonic stem (ES) cells, plays a crucial role in the differentiation potential, particularly along the neural lineage, regulating gene induction and histone H3 'Lys-4' methylation at key developmental loci, including that mediated by retinoic acid. Does not affect ES cell self-renewal. May also play an indirect or direct role in endosomal transport. The polypeptide is Protein dpy-30 homolog (Dpy30) (Mus musculus (Mouse)).